The primary structure comprises 472 residues: Collagenase 3 (472 aa).

The N-terminal stretch at 1-19 (MHPGVLAAFLFLSWTRCWS) is a signal peptide. A propeptide spans 20–104 (LPVPNDDDDD…PRCGVPDVGE (85 aa)) (activation peptide). Residues 95–102 (PRCGVPDV) carry the Cysteine switch motif. Cysteine 97 contributes to the Zn(2+) binding site. Asparagine 118 carries N-linked (GlcNAc...) asparagine glycosylation. Aspartate 129 contributes to the Ca(2+) binding site. Residues asparagine 153 and asparagine 159 are each glycosylated (N-linked (GlcNAc...) asparagine). Aspartate 163 serves as a coordination point for Ca(2+). Histidine 173 and aspartate 175 together coordinate Zn(2+). The interval 177 to 247 (YPFDGPSGLL…GALMFPIYTY (71 aa)) is interaction with TIMP2. Aspartate 180, glycine 181, serine 183, and leucine 185 together coordinate Ca(2+). A Zn(2+)-binding site is contributed by histidine 188. Residues asparagine 195, glycine 197, and aspartate 199 each coordinate Ca(2+). Histidine 201 is a binding site for Zn(2+). Ca(2+) contacts are provided by aspartate 203, aspartate 204, and glutamate 206. Zn(2+) is bound at residue histidine 223. Residue glutamate 224 is part of the active site. Zn(2+)-binding residues include histidine 227, histidine 233, and methionine 241. Residues 269-472 (PGDEDPNPKH…VMPTNSLLWC (204 aa)) form an interaction with collagen region. Hemopexin repeat units follow at residues 282-331 (PDKC…WPEL), 332-378 (PNRI…GFPK), 380-428 (VKKI…FPGI), and 429-472 (GDKV…LLWC). Cysteine 285 and cysteine 472 are oxidised to a cystine. The Ca(2+) site is built by aspartate 292, isoleucine 294, aspartate 336, and alanine 338. Tyrosine 367 is modified (phosphotyrosine; by PKDCC). Positions 384, 386, 433, and 435 each coordinate Ca(2+).

It belongs to the peptidase M10A family. Requires Ca(2+) as cofactor. The cofactor is Zn(2+). The proenzyme is activated by removal of the propeptide; this cleavage can be effected by other matrix metalloproteinases, such as MMP2, MMP3 and MMP14 and may involve several cleavage steps. Cleavage can also be autocatalytic, after partial maturation by another protease or after treatment with 4-aminophenylmercuric acetate (APMA) (in vitro). In terms of processing, N-glycosylated. Post-translationally, tyrosine phosphorylated by PKDCC/VLK. As to expression, seems to be specific to breast carcinomas.

It localises to the secreted. The protein resides in the extracellular space. It is found in the extracellular matrix. In terms of biological role, plays a role in the degradation of extracellular matrix proteins including fibrillar collagen, fibronectin, TNC and ACAN. Cleaves triple helical collagens, including type I, type II and type III collagen, but has the highest activity with soluble type II collagen. Can also degrade collagen type IV, type XIV and type X. May also function by activating or degrading key regulatory proteins, such as TGFB1 and CCN2. Plays a role in wound healing, tissue remodeling, cartilage degradation, bone development, bone mineralization and ossification. Required for normal embryonic bone development and ossification. Plays a role in the healing of bone fractures via endochondral ossification. Plays a role in wound healing, probably by a mechanism that involves proteolytic activation of TGFB1 and degradation of CCN2. Plays a role in keratinocyte migration during wound healing. May play a role in cell migration and in tumor cell invasion. The sequence is that of Collagenase 3 (MMP13) from Equus caballus (Horse).